A 79-amino-acid chain; its full sequence is UPF0349 protein BCE33L4669 (79 aa).

It belongs to the UPF0349 family.

The polypeptide is UPF0349 protein BCE33L4669 (Bacillus cereus (strain ZK / E33L)).